Consider the following 95-residue polypeptide: Glutamyl-tRNA(Gln) amidotransferase subunit C (95 aa).

The protein belongs to the GatC family. As to quaternary structure, heterotrimer of A, B and C subunits.

It carries out the reaction L-glutamyl-tRNA(Gln) + L-glutamine + ATP + H2O = L-glutaminyl-tRNA(Gln) + L-glutamate + ADP + phosphate + H(+). The enzyme catalyses L-aspartyl-tRNA(Asn) + L-glutamine + ATP + H2O = L-asparaginyl-tRNA(Asn) + L-glutamate + ADP + phosphate + 2 H(+). Allows the formation of correctly charged Asn-tRNA(Asn) or Gln-tRNA(Gln) through the transamidation of misacylated Asp-tRNA(Asn) or Glu-tRNA(Gln) in organisms which lack either or both of asparaginyl-tRNA or glutaminyl-tRNA synthetases. The reaction takes place in the presence of glutamine and ATP through an activated phospho-Asp-tRNA(Asn) or phospho-Glu-tRNA(Gln). The polypeptide is Glutamyl-tRNA(Gln) amidotransferase subunit C (Moraxella catarrhalis (Branhamella catarrhalis)).